A 92-amino-acid polypeptide reads, in one-letter code: Large ribosomal subunit protein bL28 (92 aa).

The protein belongs to the bacterial ribosomal protein bL28 family.

This chain is Large ribosomal subunit protein bL28, found in Borrelia hermsii (strain HS1 / DAH).